The chain runs to 156 residues: Large ribosomal subunit protein uL23 (156 aa).

A compositionally biased stretch (basic and acidic residues) spans 1–19; sequence MAPKAKKEAPAPPKVEAKA. The tract at residues 1–67 is disordered; that stretch reads MAPKAKKEAP…PKYPRKSAPR (67 aa). Alanine 2 is modified (n,N,N-trimethylalanine). Lysine 14 participates in a covalent cross-link: Glycyl lysine isopeptide (Lys-Gly) (interchain with G-Cter in SUMO2). Basic residues predominate over residues 20 to 67; the sequence is KALKAKKAVLKGVHSHKKKKIRTSPTFRRPKTLRLRRQPKYPRKSAPR. Residues 32 to 74 are beta-like import receptor binding (BIB) domain; it reads VHSHKKKKIRTSPTFRRPKTLRLRRQPKYPRKSAPRRNKLDHY. Position 41 is a citrulline (arginine 41). A Phosphoserine modification is found at serine 43. Threonine 45 carries the phosphothreonine modification. At lysine 70 the chain carries N6-acetyllysine.

Belongs to the universal ribosomal protein uL23 family. Component of the large ribosomal subunit. Interacts with LYAR and GNL2. Interacts with MDM2; this interaction may promote MDM2-mediated p53/TP53 polyubiquitination. Directly interacts (via BIB domain) with IPO5, IPO7, KPNB1 and TNPO1; these interactions are involved in RPL23A nuclear import for the assembly of ribosomal subunits. Interacts with IPO8. In terms of processing, N-terminus is methylated by METTL11A/NTM1. Citrullinated by PADI4.

It localises to the cytoplasm. The protein localises to the nucleus. In terms of biological role, component of the large ribosomal subunit. The ribosome is a large ribonucleoprotein complex responsible for the synthesis of proteins in the cell. Binds a specific region on the 26S rRNA. May promote p53/TP53 degradation possibly through the stimulation of MDM2-mediated TP53 polyubiquitination. The sequence is that of Large ribosomal subunit protein uL23 (RPL23A) from Oryctolagus cuniculus (Rabbit).